Reading from the N-terminus, the 213-residue chain is mRNA-decapping protein D9 (213 aa).

The Nudix hydrolase domain occupies 30–209; it reads KDTHVFAACI…EYLSYIYNML (180 aa). Residues 111 to 132 carry the Nudix box motif; that stretch reads GKLDKKESIKDCLRRELKEESD. Mg(2+) is bound at residue glutamate 117. Glutamate 126 serves as the catalytic Nucleophile. Mg(2+) is bound by residues glutamate 130 and aspartate 151.

This sequence belongs to the Nudix hydrolase family. Mg(2+) serves as cofactor. The cofactor is Mn(2+).

Its function is as follows. Decapping enzyme required for the removal of the 5'-end m7GpppN cap tethered to viral and host mRNAs to allow their decay in cells. May therefore accelerate viral and cellular mRNA turnover to eliminate competing host mRNAs and allow stage-specific synthesis of viral proteins. Acceleration of the turnover of cellular transcripts may even promote the shutoff of host protein synthesis. Does not cleave unmethylated RNAs or RNAs shorter than 24 nucleotides. The chain is mRNA-decapping protein D9 from Homo sapiens (Human).